The chain runs to 447 residues: Glyceraldehyde-3-phosphate dehydrogenase GAPB, chloroplastic (447 aa).

A chloroplast-targeting transit peptide spans 1-80; that stretch reads MATHAALAVS…STPVRGETVA (80 aa). NADP(+) is bound by residues 91–92, Asp-115, and Arg-160; that span reads RI. Residues 234-236, Thr-265, Arg-280, 293-294, and Arg-316 contribute to the D-glyceraldehyde 3-phosphate site; these read SCT and TG. Residue Cys-235 is the Nucleophile of the active site. Asn-399 provides a ligand contact to NADP(+).

Belongs to the glyceraldehyde-3-phosphate dehydrogenase family. In terms of assembly, tetramer of either four A chains (GAPDH 2) or two A and two B chains (GAPDH 1). As to expression, expressed in leaves and stems.

The protein localises to the plastid. The protein resides in the chloroplast membrane. Its subcellular location is the chloroplast stroma. The enzyme catalyses D-glyceraldehyde 3-phosphate + phosphate + NADP(+) = (2R)-3-phospho-glyceroyl phosphate + NADPH + H(+). It participates in carbohydrate biosynthesis; Calvin cycle. Involved in the photosynthetic reductive pentose phosphate pathway (Calvin-Benson cycle). Catalyzes the reduction of 1,3-diphosphoglycerate by NADPH. In Arabidopsis thaliana (Mouse-ear cress), this protein is Glyceraldehyde-3-phosphate dehydrogenase GAPB, chloroplastic (GAPB).